Here is a 430-residue protein sequence, read N- to C-terminus: MTTKITLKLNPPHNGRYYTEDDIISGSVVLKLAKATAVKQLRVILKGTSQTMTLAEADRHSSRLPQDPQTQYTKEKSTHILFHQGVQLLPPTGVEDSIKLGQDTYKYGFEFRLAGGPKCVSGHQATSHSFLEDKAHEHYGEQLPPSFNDRHEGGGVTTEELFFYNLGKVRYTVRAEADVATGNKWAPKSPLHDTMVISFLPLQCQAYVENACTSAGSDDTLVNYTALPRTYRAAADVVLSDGLSVTPEVRSNALAYVHRLDYLFRESSGKFGNIFMVFSGDPTKHSVKLTRLVLSLHEKVSFTANGHTNKNLSQLKLMDTPLDDELQLRDLHILEDGSREGKLNLGDHPVLSRLRFNEEDYIHRGNTLFSFTTCNIKREYYFQLDLHWKVDATAVRSEIIVDPVTVYAESAPPAFEGLPPYPEKPPKYEA.

A disordered region spans residues Ala55–Glu75. Polar residues predominate over residues Arg63–Tyr72.

The protein belongs to the ART10 family.

It localises to the cytoplasm. Its function is as follows. May regulate endocytosis by recruiting RSP5 ubiquitin ligase activity to specific plasma membrane proteins in response to extracellular stimuli. The protein is Arrestin-related trafficking adapter 10 (ART10) of Eremothecium gossypii (strain ATCC 10895 / CBS 109.51 / FGSC 9923 / NRRL Y-1056) (Yeast).